An 80-amino-acid polypeptide reads, in one-letter code: Trefoil factor 3 (80 aa).

An N-terminal signal peptide occupies residues 1 to 21 (MEARMFWLLVVLLALASSSSA). Residues 30–73 (NQCAVPAKDRVDCGYPQVTPEQCNNRGCCFDSSIXGVPWCFKPL) enclose the P-type domain. Intrachain disulfides connect Cys-32-Cys-58, Cys-42-Cys-57, and Cys-52-Cys-69.

In terms of assembly, monomer. Homodimer; disulfide-linked.

The protein localises to the secreted. The protein resides in the extracellular space. Its subcellular location is the extracellular matrix. It localises to the cytoplasm. Involved in the maintenance and repair of the intestinal mucosa. Promotes the mobility of epithelial cells in healing processes (motogen). This chain is Trefoil factor 3 (TFF3), found in Sus scrofa (Pig).